A 514-amino-acid chain; its full sequence is Extracellular exo-inulinase (514 aa).

Residues 1–18 (MRAFLALIFLTFVMNVES) form the signal peptide. Substrate-binding positions include 33–34 (ND) and Q52. The active-site Nucleophile is the D34. N56 is a glycosylation site (N-linked (GlcNAc...) asparagine). Substrate is bound by residues W60 and S95. N-linked (GlcNAc...) asparagine glycosylation is found at N104 and N110. 162 to 163 (RD) provides a ligand contact to substrate. N197 and N203 each carry an N-linked (GlcNAc...) asparagine glycan. Positions 214 and 300 each coordinate substrate. The active-site Proton donor/acceptor is the E214. N-linked (GlcNAc...) asparagine glycosylation is found at N357, N371, N389, and N422.

It belongs to the glycosyl hydrolase 32 family.

The protein localises to the secreted. It catalyses the reaction Hydrolysis of terminal, non-reducing (2-&gt;1)- and (2-&gt;6)-linked beta-D-fructofuranose residues in fructans.. In terms of biological role, exo-inulinase involved in utilization of the plant storage polymer inulin, consisting of fructooligosaccharides with a degree of polymerization (DP) value from 2 to 60. Splits off terminal fructose units successively from the non-reducing end of the inulin molecule. The protein is Extracellular exo-inulinase of Meyerozyma guilliermondii (strain ATCC 6260 / CBS 566 / DSM 6381 / JCM 1539 / NBRC 10279 / NRRL Y-324) (Yeast).